The chain runs to 354 residues: Variable large protein 15/16 (354 aa).

An N-terminal signal peptide occupies residues 1-18 (MRKRISAIIMTLFMVLVS). C19 carries the N-palmitoyl cysteine lipid modification. The S-diacylglycerol cysteine moiety is linked to residue C19. The disordered stretch occupies residues 333–354 (EDKSVEATNTAEATTSGQQAKN). Residues 338 to 354 (EATNTAEATTSGQQAKN) are compositionally biased toward polar residues.

Belongs to the variable large protein (Vlp) family. Delta subfamily.

It localises to the cell outer membrane. Functionally, the Vlp and Vsp proteins are antigenically distinct proteins, only one vlp or vsp gene is transcriptionally active at any one time. Switching between these genes is a mechanism of host immune response evasion. The sequence is that of Variable large protein 15/16 from Borrelia hermsii.